The chain runs to 417 residues: MSLVLKKSIDDATVRDKKVLIRVDFNVPVKNGKITNDFRIRSALPTIQKVLKEGGSCILMSHLGRPKGARMSDPSPEKGVRGYEEAATLRPVAARISELLGQKVEFAPDCLDAASYASKLKNADVLLLENVRFYAEEGSKKEEERDAMAKVLASYGDVYVSDAFGTAHRDSATMTGIPKVLGAGYAGYLMEKEINYFSRVLNNPPRPLVAIVGGAKVSDKIQLLDNMLGRINYLVIGGAMAYTFQKAQGRKIGISMCEEDKLDLAKSLLKKAQERNVQVFLPVDHVCNKEFKAADSPLVTESVDVPDGYMALDIGPRTIHMYEEVIGRCKSAIWNGPMGVFEMPCYSKGTFAVAKAMGTGTQKNGLMSIIGGGDSASAAELSGEAKNMSHVSTGGGASLELLEGKTLPGVAILTDRE.

(2R)-3-phosphoglycerate contacts are provided by Val23, Asp24, Phe25, Asn26, Arg39, Ser61, His62, Gly64, Arg65, Arg132, His168, and Arg169. Positions 214 and 215 each coordinate ADP. Residue Gly214 participates in CDP binding. AMP is bound by residues Ala215 and Lys216. Ala215 lines the ATP pocket. Residue Ala215 participates in Mg(2+) binding. Lys216 contacts (2R)-3-phosphoglycerate. Asp219 is a CDP binding site. Residue Asp219 participates in Mg(2+) binding. Lys220 and Gly238 together coordinate ADP. Residue Lys220 coordinates AMP. An ATP-binding site is contributed by Lys220. Position 238 (Gly238) interacts with CDP. AMP-binding residues include Ala239 and Ala311. Positions 239 and 311 each coordinate ATP. Residues Ala311 and Asn335 each coordinate ADP. CDP contacts are provided by Gly336 and Phe341. ADP-binding residues include Phe341, Glu342, Asp374, and Ser375. Glu342 lines the AMP pocket. Positions 342, 374, and 375 each coordinate ATP. Asp374 serves as a coordination point for Mg(2+).

The protein belongs to the phosphoglycerate kinase family. In terms of assembly, monomer. The cofactor is Mg(2+).

Its subcellular location is the cytoplasm. It catalyses the reaction (2R)-3-phosphoglycerate + ATP = (2R)-3-phospho-glyceroyl phosphate + ADP. The protein operates within carbohydrate degradation; glycolysis; pyruvate from D-glyceraldehyde 3-phosphate: step 2/5. This Leishmania major protein is Phosphoglycerate kinase, cytosolic (PGKB).